Here is a 2588-residue protein sequence, read N- to C-terminus: uncharacterized protein (2588 aa).

Over residues 1-11 (MSFKNNEKYMD) the composition is skewed to basic and acidic residues. Disordered stretches follow at residues 1 to 56 (MSFK…NISN), 442 to 598 (ELES…HFSN), 774 to 801 (KKEK…NNNI), 1303 to 1357 (DSHD…KKKY), 1631 to 1662 (QNSN…HHQN), 1685 to 1705 (NNNN…KDQP), 1820 to 1856 (KLNV…EEND), 2317 to 2342 (KKKK…DNIN), and 2415 to 2437 (YDNN…NSHT). Over residues 42–56 (NNNNNNNNNNSNISN) the composition is skewed to low complexity. Positions 413–452 (YREIEENEKVMEMQRRENELLEEKKRLKQELESYHDDSST) form a coiled coil. Positions 451–462 (STDDDSSADEQQ) are enriched in acidic residues. Basic and acidic residues-rich tracts occupy residues 463–515 (DERR…KNDD) and 522–588 (DHTH…DHTH). Low complexity predominate over residues 785–801 (DNNNNNNNNNNNDNNNI). The span at 1308-1318 (NNDDSVNDSND) shows a compositional bias: acidic residues. Residues 1319-1331 (DTNNVNVNVNVND) are compositionally biased toward low complexity. Basic residues predominate over residues 1347–1356 (DKKKKHKKKK). Over residues 1631-1643 (QNSNNKSNDSLKM) the composition is skewed to polar residues. Over residues 1685–1698 (NNNNNNNNNNNNND) the composition is skewed to low complexity. A compositionally biased stretch (basic and acidic residues) spans 1828 to 1838 (QGERQDERNID). Over residues 1839-1856 (HEDEPVSSNTEDDHEEND) the composition is skewed to acidic residues. Residues 2416 to 2434 (DNNNNNDNNNDNNNDNNNN) show a composition bias toward low complexity.

This is an uncharacterized protein from Plasmodium falciparum (isolate 3D7).